The sequence spans 122 residues: Serum amyloid A-3 protein (122 aa).

The signal sequence occupies residues 1–18 (MKPSIAIILCILILGVDS). A disordered region spans residues 87–122 (TGHGAEDSRADQFANEWGRSGKDPNHFRPAGLPKRY).

The protein belongs to the SAA family. As to expression, found in various tissues.

The protein resides in the secreted. Its function is as follows. Major acute phase reactant. Apolipoprotein of the HDL complex. In vitro exhibits antimicrobial activity against Escherichia coli, Streptococcus uberis and Pseudomonas aeruginosa. In Mus musculus (Mouse), this protein is Serum amyloid A-3 protein (Saa3).